Here is a 146-residue protein sequence, read N- to C-terminus: UPF0310 protein YdcG (146 aa).

The protein belongs to the UPF0310 family.

The sequence is that of UPF0310 protein YdcG (ydcG) from Bacillus subtilis (strain 168).